The primary structure comprises 981 residues: Rab3 GTPase-activating protein catalytic subunit (981 aa).

6 positions are modified to phosphoserine: Ser-83, Ser-379, Ser-537, Ser-579, Ser-581, and Ser-590. The disordered stretch occupies residues 592–613 (TEELKGNGQESGKKGGPKEMAN). At Ser-664 the chain carries Phosphoserine. Phosphothreonine is present on Thr-908. Residues 908 to 937 (TPPEEELKRMGSPEERRQNSVSDFPPPAGR) form a disordered region. Over residues 912 to 925 (EELKRMGSPEERRQ) the composition is skewed to basic and acidic residues.

It belongs to the Rab3-GAP catalytic subunit family. In terms of assembly, the Rab3 GTPase-activating complex is a heterodimer composed of RAB3GAP1 and RAB3GAP2. The Rab3 GTPase-activating complex interacts with DMXL2. Interacts with LMAN1. As to expression, ubiquitous.

Its subcellular location is the cytoplasm. The protein resides in the endoplasmic reticulum. The protein localises to the golgi apparatus. It is found in the cis-Golgi network. In terms of biological role, catalytic subunit of the Rab3 GTPase-activating (Rab3GAP) complex composed of RAB3GAP1 and RAB3GAP2, which has GTPase-activating protein (GAP) activity towards various Rab3 subfamily members (RAB3A, RAB3B, RAB3C and RAB3D), RAB5A and RAB43, and guanine nucleotide exchange factor (GEF) activity towards RAB18. As part of the Rab3GAP complex, acts as a GAP for Rab3 proteins by converting active RAB3-GTP to the inactive form RAB3-GDP. Rab3 proteins are involved in regulated exocytosis of neurotransmitters and hormones. The Rab3GAP complex, acts as a GEF for RAB18 by promoting the conversion of inactive RAB18-GDP to the active form RAB18-GTP. Recruits and stabilizes RAB18 at the cis-Golgi membrane in fibroblasts where RAB18 is most likely activated. Also involved in RAB18 recruitment at the endoplasmic reticulum (ER) membrane where it maintains proper ER structure. Required for normal eye and brain development. May participate in neurodevelopmental processes such as proliferation, migration and differentiation before synapse formation, and non-synaptic vesicular release of neurotransmitters. This Homo sapiens (Human) protein is Rab3 GTPase-activating protein catalytic subunit.